A 146-amino-acid chain; its full sequence is Globin (146 aa).

Residue A1 is modified to N-acetylalanine. The Globin domain occupies 1–146 (ALSAAEAEVV…IIDAMKKAGK (146 aa)). H95 is a heme b binding site.

It belongs to the globin family. In terms of assembly, monomer.

The sequence is that of Globin from Dolabella auricularia (Shoulderblade sea cat).